The chain runs to 298 residues: D-alanine--D-alanine ligase (298 aa).

The ATP-grasp domain maps to Phe97–Lys290. Pro124–Thr173 is a binding site for ATP. Positions 245, 257, and 259 each coordinate Mg(2+).

This sequence belongs to the D-alanine--D-alanine ligase family. It depends on Mg(2+) as a cofactor. Mn(2+) is required as a cofactor.

The protein localises to the cytoplasm. It carries out the reaction 2 D-alanine + ATP = D-alanyl-D-alanine + ADP + phosphate + H(+). It functions in the pathway cell wall biogenesis; peptidoglycan biosynthesis. Cell wall formation. This chain is D-alanine--D-alanine ligase, found in Petrotoga mobilis (strain DSM 10674 / SJ95).